Reading from the N-terminus, the 60-residue chain is MAKHPVPKKKTSKSKRDMRRSHHALTAPNLTECPQCHGKKLSHHICPNCGYYDGRQVLAV.

The span at 1–23 (MAKHPVPKKKTSKSKRDMRRSHH) shows a compositional bias: basic residues. The segment at 1–34 (MAKHPVPKKKTSKSKRDMRRSHHALTAPNLTECP) is disordered. The Zn(2+) site is built by cysteine 33, cysteine 36, cysteine 46, and cysteine 49. Residues 33–49 (CPQCHGKKLSHHICPNC) form a C4-type zinc finger.

It belongs to the bacterial ribosomal protein bL32 family. In terms of assembly, part of the 50S ribosomal subunit. Contacts proteins L17 and L22. The cofactor is Zn(2+).

Its function is as follows. Forms a cluster with L17 and L22, and with L22, a pair of 'tweezers' that hold together all the domains of the 23S rRNA. Interacts with the antibiotic troleandomycin which blocks the peptide exit tunnel. The sequence is that of Large ribosomal subunit protein bL32 (rpmF) from Deinococcus radiodurans (strain ATCC 13939 / DSM 20539 / JCM 16871 / CCUG 27074 / LMG 4051 / NBRC 15346 / NCIMB 9279 / VKM B-1422 / R1).